The chain runs to 283 residues: RNase adapter protein RapZ (283 aa).

8–15 (GRSGSGKS) is a binding site for ATP. 56-59 (DVRN) serves as a coordination point for GTP. The tract at residues 266-283 (RARGKNVQSRHRTLEKRK) is RNA-binding.

It belongs to the RapZ-like family. RapZ subfamily. Homotrimer.

Functionally, modulates the synthesis of GlmS, by affecting the processing and stability of the regulatory small RNA GlmZ. When glucosamine-6-phosphate (GlcN6P) concentrations are high in the cell, RapZ binds GlmZ and targets it to cleavage by RNase E. Consequently, GlmZ is inactivated and unable to activate GlmS synthesis. Under low GlcN6P concentrations, RapZ is sequestered and inactivated by an other regulatory small RNA, GlmY, preventing GlmZ degradation and leading to synthesis of GlmS. The chain is RNase adapter protein RapZ from Yersinia enterocolitica serotype O:8 / biotype 1B (strain NCTC 13174 / 8081).